The chain runs to 1806 residues: uncharacterized protein (1806 aa).

2 disordered regions span residues 38–131 and 158–282; these read EASG…SPLF and KAVS…KPRP. A compositionally biased stretch (low complexity) spans 51 to 70; the sequence is KSPLRSPARLLPLPRLAPKP. A phosphoserine mark is found at Ser-52, Ser-56, Ser-79, Ser-87, Ser-88, Ser-92, and Ser-128. A compositionally biased stretch (low complexity) spans 82–100; sequence PSLRPSSTGPSPSGGLSEE. Basic and acidic residues predominate over residues 226 to 236; it reads DTARPLVEPRP. Residues Ser-244 and Ser-284 each carry the phosphoserine modification. Disordered regions lie at residues 299-320, 355-431, 456-604, and 627-696; these read RKVA…ERPR, KEKM…GGEW, SESP…PEDD, and QSGR…ELRP. At Ser-366 the chain carries Phosphoserine. Thr-378 is modified (phosphothreonine). Ser-384 carries the phosphoserine modification. Positions 386 to 400 are enriched in basic and acidic residues; the sequence is WEEKAKLDPEPEKAA. Position 404 is a phosphoserine (Ser-404). Positions 412–422 are enriched in basic and acidic residues; sequence ELAEVKSRVAD. The segment covering 456–470 has biased composition (low complexity); the sequence is SESPLATPASPSAAP. Phosphoserine is present on residues Ser-458 and Ser-508. The span at 514–523 shows a compositional bias: polar residues; that stretch reads LFSSSASSNE. 2 stretches are compositionally biased toward basic and acidic residues: residues 524–549 and 564–573; these read VKYE…EGHS and TLRDKSRQTE. The residue at position 600 (Thr-600) is a Phosphothreonine. 2 stretches are compositionally biased toward basic and acidic residues: residues 641–652 and 661–674; these read AHARVSEPRPRP and DPPD…ENSR. Phosphoserine is present on Ser-749. Disordered regions lie at residues 860 to 901, 969 to 989, and 1000 to 1019; these read QHEG…QART, SPHV…ALRK, and QEVN…KQGS. Residues 889–900 show a composition bias toward polar residues; the sequence is RATNGPSDSQAR. 2 positions are modified to phosphoserine: Ser-969 and Ser-981. Basic and acidic residues predominate over residues 969 to 978; that stretch reads SPHVGHRRTD. Thr-1059 is modified (phosphothreonine). Phosphoserine occurs at positions 1063 and 1154. Positions 1134–1178 are disordered; sequence RGSEDGPRPQSNWKESANKMSPSGGAPQTTPTLRSRPKDLPVRRK. Over residues 1142-1166 the composition is skewed to polar residues; it reads PQSNWKESANKMSPSGGAPQTTPTL. A Phosphothreonine modification is found at Thr-1163. Residues 1169–1178 are compositionally biased toward basic and acidic residues; the sequence is RPKDLPVRRK. Thr-1179 and Thr-1185 each carry phosphothreonine. 2 disordered regions span residues 1216 to 1265 and 1291 to 1493; these read PGEA…PASS and KSSP…VASV. Position 1224 is a phosphoserine (Ser-1224). Position 1226 is a phosphothreonine (Thr-1226). 2 stretches are compositionally biased toward basic and acidic residues: residues 1244–1254 and 1317–1331; these read EQRRRSLKEMP and DPRK…DRKA. Ser-1366 is modified (phosphoserine). 2 stretches are compositionally biased toward basic and acidic residues: residues 1393–1410 and 1426–1437; these read DHPR…RAYS and HEARERRREQPK. Ser-1441 bears the Phosphoserine mark. Residues 1462-1483 are compositionally biased toward basic and acidic residues; it reads DSHKVLPRDLEKEDAPQEKERP. 2 positions are modified to phosphoserine: Ser-1488 and Ser-1506. Disordered stretches follow at residues 1512 to 1627 and 1642 to 1806; these read QLKQ…KRVD and ALKT…ENQV. A compositionally biased stretch (basic and acidic residues) spans 1522-1531; sequence TEPKDTDTLV. A compositionally biased stretch (polar residues) spans 1537 to 1568; that stretch reads QYGTWTEQCQSGESLATESPDSSATSTRKQPP. A phosphoserine mark is found at Ser-1555 and Ser-1662. Positions 1649–1666 are enriched in basic residues; it reads LSKRSRRRAPISHSLRRS. Basic and acidic residues-rich tracts occupy residues 1667–1677 and 1689–1714; these read RFSESESRSPL and DSTE…ERTP. A phosphoserine mark is found at Ser-1701, Ser-1757, Ser-1760, and Ser-1786. The span at 1753-1764 shows a compositional bias: low complexity; that stretch reads PQPKSPKSPFQP.

This is an uncharacterized protein from Homo sapiens (Human).